Reading from the N-terminus, the 425-residue chain is Histidine--tRNA ligase (425 aa).

Belongs to the class-II aminoacyl-tRNA synthetase family. In terms of assembly, homodimer.

It is found in the cytoplasm. The enzyme catalyses tRNA(His) + L-histidine + ATP = L-histidyl-tRNA(His) + AMP + diphosphate + H(+). This chain is Histidine--tRNA ligase, found in Shewanella sp. (strain W3-18-1).